A 244-amino-acid chain; its full sequence is tRNA (guanine-N(1)-)-methyltransferase (244 aa).

S-adenosyl-L-methionine is bound by residues Gly112 and 131-136 (LGDFIL). A disordered region spans residues 211-244 (IKRTSDRRPDLLEKWQQEKKPGSREQGSREQGEK).

Belongs to the RNA methyltransferase TrmD family. As to quaternary structure, homodimer.

It localises to the cytoplasm. The catalysed reaction is guanosine(37) in tRNA + S-adenosyl-L-methionine = N(1)-methylguanosine(37) in tRNA + S-adenosyl-L-homocysteine + H(+). Specifically methylates guanosine-37 in various tRNAs. This is tRNA (guanine-N(1)-)-methyltransferase from Trichormus variabilis (strain ATCC 29413 / PCC 7937) (Anabaena variabilis).